The primary structure comprises 280 residues: MSNPESLKKQVEPPGYNELFMVEDVCNVDLEQGLDLCKPEKVNKQSQRSRQSRQSLFTNTIKPQKDKMNIKTNKIKEFLNDPFTEFSKFHNSYYPDGRISTRSNFRWPLLIIWSIIIVFAVDKKFEVQKFLSIWINENRFYSEIWVPIAIYVCLLVLMLLSLIFFAEFAVLALRVTGVIIAVLGAVLGMIIAVLGMIIAALGMIIAALGATITGLLYFGHWALYKLVILSLGFKIVTPGDVCVSNTLPTHNGETALHSETTVGSDIEQIELQNMPTPVKK.

The next 4 helical transmembrane spans lie at 107 to 127, 144 to 164, 178 to 198, and 199 to 219; these read WPLL…KFEV, IWVP…SLIF, VIIA…GMII, and AALG…LYFG.

The protein belongs to the UPF0494 family.

It localises to the cytoplasm. The protein localises to the vacuole. The protein resides in the membrane. This chain is UPF0494 membrane protein C750.06c, found in Schizosaccharomyces pombe (strain 972 / ATCC 24843) (Fission yeast).